Reading from the N-terminus, the 27-residue chain is Carcinustatin-20 (27 aa).

Leucine 27 carries the post-translational modification Leucine amide.

Belongs to the allatostatin family.

It localises to the secreted. In terms of biological role, may act as a neurotransmitter or neuromodulator. The polypeptide is Carcinustatin-20 (Carcinus maenas (Common shore crab)).